The sequence spans 131 residues: Ribonuclease VapC30 (131 aa).

The PINc domain maps to 1-129 (MVIDTSALVA…FQHTDIATVA (129 aa)). Mg(2+) is bound by residues aspartate 4 and aspartate 99.

This sequence belongs to the PINc/VapC protein family. It depends on Mg(2+) as a cofactor.

In terms of biological role, toxic component of a type II toxin-antitoxin (TA) system. An RNase. Its toxic effect is neutralized by coexpression with cognate antitoxin VapB30. This Mycobacterium tuberculosis (strain CDC 1551 / Oshkosh) protein is Ribonuclease VapC30.